Here is a 54-residue protein sequence, read N- to C-terminus: Metallothionein-4 (54 aa).

This sequence belongs to the metallothionein superfamily. Type 11 family.

The chain is Metallothionein-4 (MTP4) from Yarrowia lipolytica (strain CLIB 122 / E 150) (Yeast).